Consider the following 272-residue polypeptide: Transformer-2 sex-determining protein (272 aa).

Disordered regions lie at residues lysine 21–glutamine 102 and isoleucine 182–tyrosine 272. Residues histidine 26 to serine 41 are compositionally biased toward low complexity. Residues threonine 87–glutamine 102 are compositionally biased toward basic and acidic residues. Residues arginine 105 to threonine 183 enclose the RRM domain. The segment at glutamine 184–arginine 204 is linker. Over residues arginine 205 to arginine 218 the composition is skewed to basic and acidic residues. The segment covering arginine 238–valine 266 has biased composition (basic residues).

It belongs to the splicing factor SR family. Extensively phosphorylated on serine residues in the RS domain.

Functionally, required for female sex determination in somatic cells and for spermatogenesis in male germ cells. Positive regulator of female-specific splicing and/or polyadenylation of doublesex (dsx) pre-mRNA. Splicing requires an enhancer complex, dsxRE (dsx repeat element: which contains six copies of a 13-nucleotide repeat and a purine-rich enhancer (PRE)). DsxRE is formed through cooperative interactions between tra, tra2 and the sr proteins, and these interactions require both the repeat sequences and PRE. PRE is required for specific binding of tra2 to the dsxRE. Protein-RNA and protein-protein interactions are involved in tra-2 dependent activation and repression of alternative splicing. The protein is Transformer-2 sex-determining protein (tra2) of Drosophila virilis (Fruit fly).